Consider the following 95-residue polypeptide: Large ribosomal subunit protein bL27 (95 aa).

The propeptide occupies 1 to 6 (MILQLF).

This sequence belongs to the bacterial ribosomal protein bL27 family. In terms of processing, the N-terminus is cleaved by ribosomal processing cysteine protease Prp.

This chain is Large ribosomal subunit protein bL27, found in Caldanaerobacter subterraneus subsp. tengcongensis (strain DSM 15242 / JCM 11007 / NBRC 100824 / MB4) (Thermoanaerobacter tengcongensis).